Reading from the N-terminus, the 341-residue chain is L-threonine 3-dehydrogenase (341 aa).

A Zn(2+)-binding site is contributed by C38. Active-site charge relay system residues include T40 and H43. Positions 63, 64, 93, 96, 99, and 107 each coordinate Zn(2+). NAD(+) is bound by residues I175, D195, R200, 262–264, and 286–287; these read LGI and IY.

It belongs to the zinc-containing alcohol dehydrogenase family. As to quaternary structure, homotetramer. It depends on Zn(2+) as a cofactor.

The protein localises to the cytoplasm. The catalysed reaction is L-threonine + NAD(+) = (2S)-2-amino-3-oxobutanoate + NADH + H(+). It participates in amino-acid degradation; L-threonine degradation via oxydo-reductase pathway; glycine from L-threonine: step 1/2. Functionally, catalyzes the NAD(+)-dependent oxidation of L-threonine to 2-amino-3-ketobutyrate. This Solibacter usitatus (strain Ellin6076) protein is L-threonine 3-dehydrogenase.